The sequence spans 362 residues: Manganese peroxidase 3 (362 aa).

Residues 1 to 18 form the signal peptide; sequence MAFKQLLTAISIVSVANA. Residues 19–23 constitute a propeptide that is removed on maturation; sequence ALTRR. Intrachain disulfides connect Cys26–Cys39, Cys38–Cys309, Cys58–Cys144, and Cys273–Cys338. Mn(2+)-binding residues include Glu60 and Glu64. The active-site Proton acceptor is the His71. Ca(2+) is bound by residues Asp72, Gly90, Asp92, and Ser94. Asn126 carries an N-linked (GlcNAc...) asparagine glycan. His200 is a binding site for heme b. Thr201 serves as a coordination point for Ca(2+). Residue Asp206 participates in Mn(2+) binding. Positions 218, 220, 223, and 225 each coordinate Ca(2+). The disordered stretch occupies residues 341 to 362; that stretch reads TPFPSLSADPGPATSVAPVPPS.

It belongs to the peroxidase family. Ligninase subfamily. Heme b serves as cofactor. Requires Ca(2+) as cofactor.

The protein resides in the secreted. The catalysed reaction is 2 Mn(2+) + H2O2 + 2 H(+) = 2 Mn(3+) + 2 H2O. Its function is as follows. Catalyzes the oxidation of Mn(2+) to Mn(3+). The latter, acting as a diffusible redox mediator, is capable of oxidizing a variety of lignin compounds. This isozyme is also able to oxidize phenols and amines in the absence of Mn(2+), similar to versatile peroxidases. This is Manganese peroxidase 3 (mnp3) from Phlebia radiata (White-rot fungus).